The chain runs to 300 residues: Nucleotide-binding protein Dshi_0209 (300 aa).

Gly20 to Thr27 is a binding site for ATP. Position 67–70 (Asp67–Thr70) interacts with GTP.

Belongs to the RapZ-like family.

Displays ATPase and GTPase activities. The chain is Nucleotide-binding protein Dshi_0209 from Dinoroseobacter shibae (strain DSM 16493 / NCIMB 14021 / DFL 12).